The following is a 478-amino-acid chain: MTRFLFAIILGFLLTACQQVTVEETEYVPHKLTELRVGTLYGPQIYMTSGQGNSGFDYDMAVLFAEYLDVPLKMVPYTNRAELYDALKKNEIDIIAAGMTETPARREQFRLGPPLYRVNQVLVYREGMPTPKDITDLKGKITVIADSSFVETLTQLQKRHPTLVWDQVTDKDSEELLAMIANKEIDYTIADSSSVQINRRYLPDLRSGLVLEEKLDVVWLLPPTHSDGLMSQLLAFWHQEKLAGTLDHLNEKYFGHVKRFDYIDTRAFLRAIETVLPRYRQLFETHAGDLDWRKLAATSYQESHWNPNARSPTGVRGMMMLTQPTAKEIGITNRLDAEESIRGGAAYLRDMINRLPESIPESQRMWFALASYNIGYAHVEDARKLAESMELNPNAWRDLKKVLPLLQKRKYYQKTRYGYARGSEAVHYVDSIRRYYDTLVWVDNQSKQQNSDEEEPSDLASEDGPAPVPGTLSPDKPK.

A signal peptide spans 1-22 (MTRFLFAIILGFLLTACQQVTV). Residues 23–257 (EETEYVPHKL…HLNEKYFGHV (235 aa)) form a non-LT domain region. The LT domain stretch occupies residues 258-478 (KRFDYIDTRA…PGTLSPDKPK (221 aa)). The active site involves Glu-302. The interval 446–478 (SKQQNSDEEEPSDLASEDGPAPVPGTLSPDKPK) is disordered. Residues 451–461 (SDEEEPSDLAS) show a composition bias toward acidic residues.

This sequence in the N-terminal section; belongs to the bacterial solute-binding protein 3 family. In the C-terminal section; belongs to the transglycosylase Slt family.

It localises to the cell outer membrane. It catalyses the reaction Exolytic cleavage of the (1-&gt;4)-beta-glycosidic linkage between N-acetylmuramic acid (MurNAc) and N-acetylglucosamine (GlcNAc) residues in peptidoglycan, from either the reducing or the non-reducing ends of the peptidoglycan chains, with concomitant formation of a 1,6-anhydrobond in the MurNAc residue.. Its function is as follows. Murein-degrading enzyme that degrades murein glycan strands and insoluble, high-molecular weight murein sacculi, with the concomitant formation of a 1,6-anhydromuramoyl product. Lytic transglycosylases (LTs) play an integral role in the metabolism of the peptidoglycan (PG) sacculus. Their lytic action creates space within the PG sacculus to allow for its expansion as well as for the insertion of various structures such as secretion systems and flagella. The protein is Membrane-bound lytic murein transglycosylase F of Shewanella sp. (strain ANA-3).